The sequence spans 620 residues: uncharacterized protein (620 aa).

The Radical SAM core domain maps to 324–586 (RRYVTIAIIK…HPWEKGIYPT (263 aa)). The [4Fe-4S] cluster site is built by cysteine 338, cysteine 342, and cysteine 345. Lysine 552 bears the N6-(pyridoxal phosphate)lysine mark.

This sequence belongs to the radical SAM superfamily. KamA family. [4Fe-4S] cluster serves as cofactor. Requires pyridoxal 5'-phosphate as cofactor.

This is an uncharacterized protein from Methanocaldococcus jannaschii (strain ATCC 43067 / DSM 2661 / JAL-1 / JCM 10045 / NBRC 100440) (Methanococcus jannaschii).